The sequence spans 517 residues: Crotonobetaine/carnitine--CoA ligase (517 aa).

It belongs to the ATP-dependent AMP-binding enzyme family.

The enzyme catalyses 4-(trimethylamino)butanoate + ATP + CoA = 4-(trimethylamino)butanoyl-CoA + AMP + diphosphate. It catalyses the reaction crotonobetaine + ATP + CoA = crotonobetainyl-CoA + AMP + diphosphate. The catalysed reaction is (R)-carnitine + ATP + CoA = (R)-carnitinyl-CoA + AMP + diphosphate. The protein operates within amine and polyamine metabolism; carnitine metabolism. In terms of biological role, catalyzes the transfer of CoA to carnitine, generating the initial carnitinyl-CoA needed for the CaiB reaction cycle. Also has activity toward crotonobetaine and gamma-butyrobetaine. The sequence is that of Crotonobetaine/carnitine--CoA ligase from Escherichia coli O1:K1 / APEC.